The chain runs to 397 residues: Enoyl-[acyl-carrier-protein] reductase [NADH] (397 aa).

NAD(+) contacts are provided by residues 48 to 53 (GASTGY), 74 to 75 (FE), 111 to 112 (DA), and 139 to 140 (AA). Tyrosine 225 serves as a coordination point for substrate. The active-site Proton donor is the tyrosine 235. NAD(+) contacts are provided by residues lysine 244 and 273–275 (VVT).

Belongs to the TER reductase family. In terms of assembly, monomer.

It catalyses the reaction a 2,3-saturated acyl-[ACP] + NAD(+) = a (2E)-enoyl-[ACP] + NADH + H(+). It functions in the pathway lipid metabolism; fatty acid biosynthesis. Functionally, involved in the final reduction of the elongation cycle of fatty acid synthesis (FAS II). Catalyzes the reduction of a carbon-carbon double bond in an enoyl moiety that is covalently linked to an acyl carrier protein (ACP). The protein is Enoyl-[acyl-carrier-protein] reductase [NADH] of Burkholderia pseudomallei (strain 1710b).